Reading from the N-terminus, the 400-residue chain is D(3) dopamine receptor (400 aa).

Residues 1 to 32 (MAPLSQLSGHLNYTCGVENSTGASQARPHAYY) lie on the Extracellular side of the membrane. Asn-12 and Asn-19 each carry an N-linked (GlcNAc...) asparagine glycan. A helical transmembrane segment spans residues 33 to 55 (ALSYCALILAIVFGNGLVCMAVL). At 56–65 (KERALQTTTN) the chain is on the cytoplasmic side. Residues 66–88 (YLVVSLAVADLLVATLVMPWVVY) form a helical membrane-spanning segment. The Extracellular portion of the chain corresponds to 89-104 (LEVTGGVWNFSRVCCD). The N-linked (GlcNAc...) asparagine glycan is linked to Asn-97. The cysteines at positions 103 and 181 are disulfide-linked. Residues 105-126 (VFVTLDVMMCTASILNLCAISI) traverse the membrane as a helical segment. Residues 127 to 149 (DRYTAVVMPVHYQHGTGQSSCRR) are Cytoplasmic-facing. The chain crosses the membrane as a helical span at residues 150 to 170 (VTLMITAVWVLAFAVSCPLLF). Topologically, residues 171-187 (GFNTTGDPTVCSISNPD) are extracellular. N-linked (GlcNAc...) asparagine glycosylation is present at Asn-173. A helical membrane pass occupies residues 188-209 (FVIYSSVVSFYLPFGVTVLVYA). Residues 210–329 (RIYVVLKQRR…VPLREKKATQ (120 aa)) are Cytoplasmic-facing. A helical transmembrane segment spans residues 330–351 (MVAIVLGAFIVCWLPFFLTHVL). Over 352–366 (NTHCQTCHVSPELYS) the chain is Extracellular. Cysteines 355 and 358 form a disulfide. A helical membrane pass occupies residues 367-386 (ATTWLGYVNSALNPVIYTTF). Over 387–400 (NIEFRKAFLKILSC) the chain is Cytoplasmic.

This sequence belongs to the G-protein coupled receptor 1 family. In terms of assembly, interacts with CLIC6. Interacts with GRK4. Interacts with PALM. Interacts with FLNA (via filamin repeat 21); increases PKA-mediated phosphorylation of FLNA. In terms of processing, phosphorylated by GRK4. Palmitoylated.

Its subcellular location is the cell membrane. Its function is as follows. Dopamine receptor whose activity is mediated by G proteins which inhibit adenylyl cyclase. Promotes cell proliferation. This Chlorocebus aethiops (Green monkey) protein is D(3) dopamine receptor (DRD3).